Reading from the N-terminus, the 894-residue chain is ABC-transporter-regulating transcription factor (894 aa).

Positions 71–98 form a DNA-binding region, zn(2)-C6 fungal-type; the sequence is CDMCRKKKIKCDGKMPKCSHCINYRTDC. Over residues 159 to 174 the composition is skewed to polar residues; sequence NTALNSLKSPTNKFNG. A disordered region spans residues 159–219; sequence NTALNSLKSP…PKESETEVEG (61 aa). Low complexity predominate over residues 175–189; that stretch reads SSATSQSQHTTASRH. Residues 199-210 are compositionally biased toward polar residues; it reads SPHTAATSPNSP. A helical transmembrane segment spans residues 649–669; the sequence is CVWLILYYPVSALVTLFANIL. The tract at residues 724 to 797 is disordered; it reads AEKESHSKKK…MSNPTRAFAP (74 aa). Residues 736–750 are compositionally biased toward basic and acidic residues; it reads AAPDEPQDLRQKTPD. Polar residues-rich tracts occupy residues 751 to 761 and 771 to 792; these read ENSVPSPSTKR and LFPSSSYPINLGNTGPDMSNPT.

It localises to the nucleus. Its subcellular location is the membrane. Functionally, transcription factor that regulates expression of the genes related to resistance to azole compounds. In Aspergillus oryzae (strain ATCC 42149 / RIB 40) (Yellow koji mold), this protein is ABC-transporter-regulating transcription factor.